The sequence spans 410 residues: Elongation factor Tu (410 aa).

Residues 10 to 214 enclose the tr-type G domain; sequence KPHVNIGTIG…EVDAYIPTPE (205 aa). Residues 19-26 form a G1 region; it reads GHVDHGKT. GTP is bound at residue 19–26; sequence GHVDHGKT. Residue threonine 26 coordinates Mg(2+). Positions 60–64 are G2; sequence GITIN. Residues 81–84 are G3; the sequence is DCPG. Residues 81–85 and 136–139 each bind GTP; these read DCPGH and NKAD. The G4 stretch occupies residues 136-139; it reads NKAD. The tract at residues 174-176 is G5; sequence SAL.

This sequence belongs to the TRAFAC class translation factor GTPase superfamily. Classic translation factor GTPase family. EF-Tu/EF-1A subfamily. In terms of assembly, monomer.

The protein localises to the cytoplasm. It carries out the reaction GTP + H2O = GDP + phosphate + H(+). In terms of biological role, GTP hydrolase that promotes the GTP-dependent binding of aminoacyl-tRNA to the A-site of ribosomes during protein biosynthesis. The chain is Elongation factor Tu from Arthrospira platensis (Spirulina platensis).